A 135-amino-acid chain; its full sequence is MAEAKTGAKAAPRVAKAAKAAPKKAAPNDAEAIGAANAANVKGPKHTPRTPKPRGRRKTRIGYVVSDKMQKTIVVELEDRMRHPLYGKIIRTTKKVKAHDEDSVAGIGDRVSLMETRPLSATKRWRLVEILEKAK.

Residues 1–59 (MAEAKTGAKAAPRVAKAAKAAPKKAAPNDAEAIGAANAANVKGPKHTPRTPKPRGRRKT) form a disordered region. Residues 8–42 (AKAAPRVAKAAKAAPKKAAPNDAEAIGAANAANVK) are compositionally biased toward low complexity. A compositionally biased stretch (basic residues) spans 43 to 59 (GPKHTPRTPKPRGRRKT).

It belongs to the universal ribosomal protein uS17 family. Part of the 30S ribosomal subunit.

One of the primary rRNA binding proteins, it binds specifically to the 5'-end of 16S ribosomal RNA. The chain is Small ribosomal subunit protein uS17 from Mycobacterium bovis (strain ATCC BAA-935 / AF2122/97).